A 3038-amino-acid chain; its full sequence is Lovastatin nonaketide synthase, polyketide synthase component (3038 aa).

In terms of domain architecture, Ketosynthase family 3 (KS3) spans 8-447 (NEPIVVVGSG…GTNAHAIIEE (440 aa)). Active-site for beta-ketoacyl synthase activity residues include cysteine 181, histidine 320, and histidine 367. The malonyl-CoA:ACP transacylase (MAT) domain stretch occupies residues 562 to 889 (IFTGQGAQWP…GKNDLDTFSR (328 aa)). Serine 656 functions as the For malonyltransferase activity in the catalytic mechanism. The tract at residues 695-757 (AMLAAGMSFE…DESTFARLLR (63 aa)) is lovC-binding. Positions 953 to 1089 (HLLLGKLSEY…GQLALMIGDV (137 aa)) are N-terminal hotdog fold. The tract at residues 953-1263 (HLLLGKLSEY…ENITFKPFSP (311 aa)) is dehydratase (DH) domain. The PKS/mFAS DH domain maps to 953 to 1267 (HLLLGKLSEY…FKPFSPPDAS (315 aa)). Residue histidine 985 is the Proton acceptor; for dehydratase activity of the active site. A C-terminal hotdog fold region spans residues 1107-1267 (EEHPHMNRVN…FKPFSPPDAS (161 aa)). The active-site Proton donor; for dehydratase activity is aspartate 1174. Residues 1443 to 1543 (LEIGAGTGGA…ARSLLKPGGQ (101 aa)) form a methyltransferase (CMet) domain region. The ketoreductase (KR) domain stretch occupies residues 2139–2437 (TLPTRVRSID…KIPEYRGAKA (299 aa)). Positions 2463-2538 (QIVIDGLSAK…DLADEAAARL (76 aa)) constitute a Carrier domain. Residue serine 2498 is modified to O-(pantetheine 4'-phosphoryl)serine. The tract at residues 2546 to 2602 (VAATDGGAESTDNTSENEVSGREDTDLSAAATITEPSSADEDDTEPGDEDVPRSHHP) is disordered. The segment covering 2583–2594 (SADEDDTEPGDE) has biased composition (acidic residues). Residues 2602 to 2952 (PLSLGQEYSW…PTSNQPAPLL (351 aa)) are inactive Condensation domain.

Homodimer. Each MAT domain from the lovB homodimer binds one lovC molecule to form the final active lovB-lovC megasynthase complex. Pantetheine 4'-phosphate is required as a cofactor.

It catalyses the reaction holo-[lovastatin nonaketide synthase] + 9 malonyl-CoA + S-adenosyl-L-methionine + 11 NADPH + 19 H(+) = dihydromonacolin L-[lovastatin nonaketide synthase] + S-adenosyl-L-homocysteine + 9 CO2 + 11 NADP(+) + 9 CoA + 6 H2O. It functions in the pathway polyketide biosynthesis; lovastatin biosynthesis. Lovastatin nonaketide synthase; part of the gene cluster that mediates the biosynthesis of lovastatin (also known as mevinolin, mevacor or monacolin K), a hypolipidemic inhibitor of (3S)-hydroxymethylglutaryl-coenzyme A (HMG-CoA) reductase (HMGR). The first step in the biosynthesis of lovastatin is the production of dihydromonacolin L acid by the lovastatin nonaketide synthase lovB and the trans-acting enoyl reductase lovC (called the lovB-lovC megasynthase complex) via condensation of one acetyl-CoA unit and 8 malonyl-CoA units. Dihydromonacolin L acid is released from lovB by the thioesterase lovG. Next, dihydromonacolin L acid is oxidized by the dihydromonacolin L monooxygenase lovA twice to form monacolin J acid. The 2-methylbutyrate moiety of lovastatin is synthesized by the lovastatin diketide synthase lovF via condensation of one acetyl-CoA unit and one malonyl-CoA unit. Finally, the covalent attachment of this moiety to monacolin J acid is catalyzed by the transesterase lovD to yield lovastatin. LovD has broad substrate specificity and can also convert monacolin J to simvastatin using alpha-dimethylbutanoyl-S-methyl-3-mercaptopropionate (DMB-S-MMP) as the thioester acyl donor, and can also catalyze the reverse reaction and function as hydrolase in vitro. LovD has much higher activity with LovF-bound 2-methylbutanoate than with free diketide substrates. This is Lovastatin nonaketide synthase, polyketide synthase component (lovB) from Aspergillus terreus (strain NIH 2624 / FGSC A1156).